A 424-amino-acid polypeptide reads, in one-letter code: Zinc finger protein 597 (424 aa).

A KRAB domain is found at 14–88; it reads ILFEDLAVYF…KYPIAAPLVP (75 aa). C2H2-type zinc fingers lie at residues 156–178, 184–206, 212–234, and 240–262; these read YKCPECDQNFSDHSYLVLHQKIH, HKCGDCGKIFNHRANLRTHRRIH, YKCAKCSASFRQHSHLSRHMNSH, and YTCSICGRGFMWLPGLAQHQKSH. K300 is covalently cross-linked (Glycyl lysine isopeptide (Lys-Gly) (interchain with G-Cter in SUMO2)). C2H2-type zinc fingers lie at residues 341–363, 369–391, and 397–419; these read LQCPDCDMTFPCFSELISHQNIH, HKCKTCEESFALDSELACHQKSH, and FKCTVCGKTFKSNLHLITHKRTH.

Belongs to the krueppel C2H2-type zinc-finger protein family.

The protein localises to the nucleus. Functionally, may be involved in transcriptional regulation. This Homo sapiens (Human) protein is Zinc finger protein 597 (ZNF597).